Consider the following 469-residue polypeptide: Aspartyl/glutamyl-tRNA(Asn/Gln) amidotransferase subunit B (469 aa).

It belongs to the GatB/GatE family. GatB subfamily. As to quaternary structure, heterotrimer of A, B and C subunits.

It carries out the reaction L-glutamyl-tRNA(Gln) + L-glutamine + ATP + H2O = L-glutaminyl-tRNA(Gln) + L-glutamate + ADP + phosphate + H(+). The catalysed reaction is L-aspartyl-tRNA(Asn) + L-glutamine + ATP + H2O = L-asparaginyl-tRNA(Asn) + L-glutamate + ADP + phosphate + 2 H(+). Allows the formation of correctly charged Asn-tRNA(Asn) or Gln-tRNA(Gln) through the transamidation of misacylated Asp-tRNA(Asn) or Glu-tRNA(Gln) in organisms which lack either or both of asparaginyl-tRNA or glutaminyl-tRNA synthetases. The reaction takes place in the presence of glutamine and ATP through an activated phospho-Asp-tRNA(Asn) or phospho-Glu-tRNA(Gln). This Thermus thermophilus (strain ATCC BAA-163 / DSM 7039 / HB27) protein is Aspartyl/glutamyl-tRNA(Asn/Gln) amidotransferase subunit B.